The following is a 785-amino-acid chain: MIANVDLHIHSRFSGGTSKDMNVENILKYGKLKGLNIIGTGDCTHPDYLEEIKQYKDRELILTTEIEDKNRVHHLILLPSISKVEELREILKKYSKDIDKEGRPRVSIGGAELLEIVRDVGGLIGPAHCVPPDTLLILENGFKRIVDIKVGDKVLTHENRFKKVEKVYKRRYIGDIIKIKVRYFPEEIILTPEHPVYAIKTEKRCDGSHGICKFNCLTQYTNPSCKKRYRKYKREWIIAKDLKVGDVIVYPIPNRVRDIKYLSLDKYLSNIKREFCRSRIPEKIEVSEEFCRLVGYFLSEGYCFRDGIGFALGENEKKIIDDIEYLMKKIFNLKPKIRDDGRSEGIELKYYSRVLRDFFGDMFYCGDEKRAWNKALPNEFLYLPKNKQLQIFIGWWRGDKGVTTSEILMNQLRLISLRLGFIITFSKHVPKNPKIGDREVIKYHARWQGRVSILDEKIVDELKNEDIKLPKKDVRYGWIKGNYLYAPIIRIGREYYDGFVYNLEVEDDSSYVTVSGTLHNCFTPWTSLYKSFDSIYDCYNKKPDFVELGLSADTDMADMIPELRDLPFLSNSDAHSYHPHRLGREFNQIEVDYIGGIEDNFEQIKKAIKHNKIIANYGLDPKLGKYHLTACSKCHTRFKLEDAKKYNWKCPKCGGSIKKGVLSRVEELSDGKIEHPKFRPPYYKLIPLAEMISLTIGKGIFTKAVQSLWEEFIKKYGNEIEVLINADIDELSKIHPKVAETINLFRKGKIYIYPGGGGEYGKISFKPQKVEWYREEVTLDRWLKQ.

Residues 293–421 (LVGYFLSEGY…LRLISLRLGF (129 aa)) form the DOD-type homing endonuclease domain.

In terms of processing, this protein undergoes a protein self splicing that involves a post-translational excision of the intervening region (intein) followed by peptide ligation.

This is an uncharacterized protein from Methanocaldococcus jannaschii (strain ATCC 43067 / DSM 2661 / JAL-1 / JCM 10045 / NBRC 100440) (Methanococcus jannaschii).